We begin with the raw amino-acid sequence, 2175 residues long: Non-reducing polyketide synthase PKS1 (2175 aa).

The segment at 5–242 is N-terminal acylcarrier protein transacylase domain (SAT); the sequence is LLFGDQTAEQ…VSIPIYGPYH (238 aa). Residues 369 to 801 form the Ketosynthase family 3 (KS3) domain; that stretch reads TDKIAIVGMA…GGNTALLIED (433 aa). Catalysis depends on for beta-ketoacyl synthase activity residues C541, H676, and H719. Residues 900–1212 are malonyl-CoA:ACP transacylase (MAT) domain; that stretch reads FCFTGQGSQY…ISTSICHLFT (313 aa). S988 serves as the catalytic For acyl/malonyl transferase activity. The tract at residues 1285 to 1604 is product template (PT) domain; sequence STSCQNVISE…RKVLNVFLPP (320 aa). Residues 1289–1424 form an N-terminal hotdog fold region; the sequence is QNVISEEFDG…CTIRYEDKAV (136 aa). A PKS/mFAS DH domain is found at 1289–1599; the sequence is QNVISEEFDG…FQQIPRKVLN (311 aa). Residue H1321 is the Proton acceptor; for dehydratase activity of the active site. Residues 1452–1599 are C-terminal hotdog fold; the sequence is AHKVQRGMAY…FQQIPRKVLN (148 aa). D1512 (proton donor; for dehydratase activity) is an active-site residue. The interval 1640–1664 is disordered; that stretch reads PVRKSAGPAKAAAAPSMPKPSKVAA. The segment covering 1643–1664 has biased composition (low complexity); sequence KSAGPAKAAAAPSMPKPSKVAA. One can recognise a Carrier 1 domain in the interval 1666–1743; it reads KPAGSMVDKV…EMKKYFSQFN (78 aa). Residue S1703 is modified to O-(pantetheine 4'-phosphoryl)serine. Positions 1766–1804 are disordered; that stretch reads ATPFDEMSTPASSAPSVPQSDAGKPSPDSPTGDSLSDDV. The span at 1774–1784 shows a compositional bias: polar residues; sequence TPASSAPSVPQ. The 78-residue stretch at 1801–1878 folds into the Carrier 2 domain; that stretch reads SDDVGDVSIA…DIENALGMRP (78 aa). At S1838 the chain carries O-(pantetheine 4'-phosphoryl)serine. The segment at 1879 to 1899 is disordered; the sequence is KPKAVGPKLSKPSTKTDMNEV. The span at 1889 to 1899 shows a compositional bias: polar residues; that stretch reads KPSTKTDMNEV. The claisen cyclase domain stretch occupies residues 1932-2158; the sequence is KVFFLPDGSG…GHHFSMMKDP (227 aa). Catalysis depends on S2002, which acts as the For Claisen cyclase activity.

The cofactor is pantetheine 4'-phosphate.

It catalyses the reaction 6 malonyl-CoA + acetyl-CoA + 6 H(+) = naphtopyrone YWA1 + 6 CO2 + 7 CoA + H2O. It participates in pigment biosynthesis; melanin biosynthesis. Its function is as follows. Non-reducing polyketide synthase; part of the gene cluster 29 that mediates the biosynthesis of mediates the biosynthesis of dihydroxynaphthalene (DHN)-melanin, a bluish-green pigment and a structural component of the conidial wall. The first step of the pathway is the production of the heptaketide naphtopyrone YWA1 by the polyketide synthase PKS1 though condensation of acetyl-CoA with malonyl-CoA. The polypeptide is Non-reducing polyketide synthase PKS1 (Zymoseptoria tritici (strain CBS 115943 / IPO323) (Speckled leaf blotch fungus)).